The primary structure comprises 65 residues: Large ribosomal subunit protein bL31 (65 aa).

Residues Cys16, Cys18, Cys36, and Cys39 each contribute to the Zn(2+) site.

This sequence belongs to the bacterial ribosomal protein bL31 family. Type A subfamily. As to quaternary structure, part of the 50S ribosomal subunit. Zn(2+) serves as cofactor.

Functionally, binds the 23S rRNA. The sequence is that of Large ribosomal subunit protein bL31 from Alkaliphilus metalliredigens (strain QYMF).